The primary structure comprises 225 residues: Small ribosomal subunit protein uS3 (225 aa).

Positions 38–106 (IRRFLQKKFK…PIGMNIIEVK (69 aa)) constitute a KH type-2 domain.

Belongs to the universal ribosomal protein uS3 family. In terms of assembly, part of the 30S ribosomal subunit. Forms a tight complex with proteins S10 and S14.

Functionally, binds the lower part of the 30S subunit head. Binds mRNA in the 70S ribosome, positioning it for translation. The protein is Small ribosomal subunit protein uS3 of Leptospira biflexa serovar Patoc (strain Patoc 1 / Ames).